We begin with the raw amino-acid sequence, 178 residues long: FXYD domain-containing ion transport regulator 5 (178 aa).

Residues 1 to 21 (MSPSGRLCLLTIVGLILPTRG) form the signal peptide. The Extracellular segment spans residues 22–145 (QTLKDTTSSS…FYDEHTLRKR (124 aa)). The segment at 23–131 (TLKDTTSSSS…QTLKPSGFHE (109 aa)) is disordered. 2 stretches are compositionally biased toward low complexity: residues 26 to 36 (DTTSSSSADST) and 68 to 77 (TPQPQTQTQQ). Residues 103-125 (DTTTLSERPSPSTDVQTDPQTLK) show a composition bias toward polar residues. Residues 146 to 164 (GLLVAAVLFITGIIILTSG) form a helical membrane-spanning segment. At 165 to 178 (KCRQLSRLCRNRCR) the chain is on the cytoplasmic side.

This sequence belongs to the FXYD family. As to quaternary structure, regulatory subunit of the sodium/potassium-transporting ATPase which is composed of a catalytic alpha subunit, a non-catalytic beta subunit and an additional regulatory subunit. The regulatory subunit, a member of the FXYD protein family, modulates the enzymatic activity in a tissue- and isoform-specific way by changing affinities of the Na+/K+-ATPase toward Na(+), K(+) or ATP. In terms of processing, glycosylated.

It is found in the cell membrane. The protein resides in the basolateral cell membrane. Functionally, associates with and regulates the activity of the sodium/potassium-transporting ATPase (NKA) which catalyzes the hydrolysis of ATP coupled with the exchange of Na(+) and K(+) ions across the plasma membrane. May increase NKA activity by increasing the apparent affinity for Na(+). Involved in down-regulation of E-cadherin which results in reduced cell adhesion. Promotes metastasis. This Homo sapiens (Human) protein is FXYD domain-containing ion transport regulator 5 (FXYD5).